The sequence spans 31 residues: Cliotide T13 (31 aa).

Residues 1 to 31 (DTTPCGESCVWIPCVSSIVGCSCQNKVCYQN) constitute a cross-link (cyclopeptide (Asp-Asn)). Cystine bridges form between Cys-5/Cys-21, Cys-9/Cys-23, and Cys-14/Cys-28.

In terms of processing, contains 3 disulfide bonds. This is a cyclic peptide. In terms of tissue distribution, expressed in seed but not in root nodules.

Its function is as follows. Probably participates in a plant defense mechanism. Not active against Gram-negative bacterium E.coli ATCC 700926 or Gram-positive bacterium S.aureus ATCC 12600 up to a concentration of 100 uM under low-salt conditions. This chain is Cliotide T13, found in Clitoria ternatea (Butterfly pea).